The following is a 284-amino-acid chain: Nucleoid occlusion protein (284 aa).

Positions Glu-143–Leu-162 form a DNA-binding region, H-T-H motif.

This sequence belongs to the ParB family.

It localises to the cytoplasm. The protein resides in the nucleoid. Effects nucleoid occlusion by binding relatively nonspecifically to DNA and preventing the assembly of the division machinery in the vicinity of the nucleoid, especially under conditions that disturb the cell cycle. It helps to coordinate cell division and chromosome segregation by preventing the formation of the Z ring through the nucleoid, which would cause chromosome breakage. This Listeria innocua serovar 6a (strain ATCC BAA-680 / CLIP 11262) protein is Nucleoid occlusion protein.